Consider the following 202-residue polypeptide: LexA repressor (202 aa).

Positions 28 to 48 (RAEIAQRLGFRSPNAAEEHLK) form a DNA-binding region, H-T-H motif. Active-site for autocatalytic cleavage activity residues include Ser119 and Lys156.

The protein belongs to the peptidase S24 family. Homodimer.

It catalyses the reaction Hydrolysis of Ala-|-Gly bond in repressor LexA.. Functionally, represses a number of genes involved in the response to DNA damage (SOS response), including recA and lexA. Binds to the 16 bp palindromic sequence 5'-CTGTATATATATACAG-3'. In the presence of single-stranded DNA, RecA interacts with LexA causing an autocatalytic cleavage which disrupts the DNA-binding part of LexA, leading to derepression of the SOS regulon and eventually DNA repair. The protein is LexA repressor of Escherichia coli (strain K12 / MC4100 / BW2952).